The primary structure comprises 653 residues: Putative clathrin assembly protein At2g25430 (653 aa).

Residues 23 to 159 form the ENTH domain; that stretch reads VASNMAPDLE…ELALFERKSG (137 aa). Residues 160–171 are compositionally biased toward low complexity; that stretch reads VSVNSGGNSSHH. The tract at residues 160 to 240 is disordered; that stretch reads VSVNSGGNSS…GGGGGGRDEK (81 aa). Positions 172-186 are enriched in basic and acidic residues; that stretch reads SNNDDRYGRGRDDFR. Residues 197-214 show a composition bias toward gly residues; that stretch reads NGGGGGSDFRGDNNGYGG. At Ser-221 the chain carries Phosphoserine. Thr-244 is subject to Phosphothreonine. Positions 376–389 are enriched in basic and acidic residues; sequence RAKRGKSPERKEIE. The disordered stretch occupies residues 376-431; it reads RAKRGKSPERKEIEAPPPVVEEEEPEPDMNEIKALPPPENYTPPPPPEPEPQPEKP. The segment covering 395–404 has biased composition (acidic residues); sequence VEEEEPEPDM. The span at 410 to 425 shows a compositional bias: pro residues; sequence LPPPENYTPPPPPEPE.

Its subcellular location is the membrane. The protein localises to the clathrin-coated pit. The protein resides in the golgi apparatus. It is found in the cytoplasmic vesicle. It localises to the clathrin-coated vesicle. This Arabidopsis thaliana (Mouse-ear cress) protein is Putative clathrin assembly protein At2g25430.